Consider the following 127-residue polypeptide: MLSHQYIVCSLFRKDYHYKNFSQISLDSTFLPVAINTNCLNHFDIHLYLFQNFSCHRLLKHEFSNSEKERTTGKQKGKMYKSFNVFESRGIIIKERSKAFNICFIKGIIQRKVFLDSFFFDVLAQLP.

This is an uncharacterized protein from Saccharomyces cerevisiae (strain ATCC 204508 / S288c) (Baker's yeast).